We begin with the raw amino-acid sequence, 837 residues long: Tuftelin-interacting protein 11 (837 aa).

Residues 1–13 (MSLSHLYRDGEGH) show a composition bias toward basic and acidic residues. 3 disordered regions span residues 1–31 (MSLS…DWDL), 54–73 (WAER…RARD), and 85–136 (LKKG…AGGT). Residues 1–50 (MSLSHLYRDGEGHMDDDEDERENFEITDWDLQNEFNPNRQRHWQTKEEAT) form a required for interaction with DHX15 region. Serine 2 is subject to Phosphoserine. The span at 14-28 (MDDDEDERENFEITD) shows a compositional bias: acidic residues. The segment covering 54 to 64 (WAERDSDEERP) has biased composition (basic and acidic residues). Residues serine 59 and serine 98 each carry the phosphoserine modification. Residues 91–102 (EEAELEDSDDEE) show a composition bias toward acidic residues. Residues 103–116 (KPVKQDEFPKDFGP) are compositionally biased toward basic and acidic residues. Serine 144 carries the post-translational modification Phosphoserine. The G-patch domain maps to 149–195 (TKGIGQKLLQKMGYVPGRGLGKNAQGIINPIEAKQRKGKGAVGAYGS). Disordered stretches follow at residues 183 to 236 (QRKG…KKKP) and 287 to 313 (HKHS…ARAP). Phosphoserine is present on serine 210. Residues 217–231 (EFQKELSQWRKDPSG) show a composition bias toward basic and acidic residues. A Nuclear localization signal motif is present at residues 700 to 705 (VKDKFN). The tract at residues 710 to 734 (IMNRAVSSNVGAYMQPGAREHIAYL) is required for nuclear speckle localization.

The protein belongs to the TFP11/STIP family. As to quaternary structure, identified in the spliceosome C complex. Found in the Intron Large (IL) complex, a post-mRNA release spliceosomal complex containing the excised intron, U2, U5 and U6 snRNPs, and splicing factors. Interacts with TUFT1. Interacts with DHX15; indicative for a recruitment of DHX15 to the IL complex. Interacts with GCFC2.

It localises to the cytoplasm. Its subcellular location is the nucleus. In terms of biological role, involved in pre-mRNA splicing, specifically in spliceosome disassembly during late-stage splicing events. Intron turnover seems to proceed through reactions in two lariat-intron associated complexes termed Intron Large (IL) and Intron Small (IS). In cooperation with DHX15 seems to mediate the transition of the U2, U5 and U6 snRNP-containing IL complex to the snRNP-free IS complex leading to efficient debranching and turnover of excised introns. May play a role in the differentiation of ameloblasts and odontoblasts or in the forming of the enamel extracellular matrix. The polypeptide is Tuftelin-interacting protein 11 (TFIP11) (Bos taurus (Bovine)).